The primary structure comprises 320 residues: Ferrochelatase (320 aa).

The Fe cation site is built by H194 and E275.

This sequence belongs to the ferrochelatase family. As to quaternary structure, monomer.

It localises to the cytoplasm. It carries out the reaction heme b + 2 H(+) = protoporphyrin IX + Fe(2+). Its pathway is porphyrin-containing compound metabolism; protoheme biosynthesis; protoheme from protoporphyrin-IX: step 1/1. Its function is as follows. Catalyzes the ferrous insertion into protoporphyrin IX. The sequence is that of Ferrochelatase from Escherichia coli O9:H4 (strain HS).